We begin with the raw amino-acid sequence, 349 residues long: Paired box protein Pax-4 (349 aa).

Residues 5 to 131 (GLSSVNQLGG…SSINRVLRAL (127 aa)) constitute a DNA-binding region (paired). A PAI subdomain region spans residues 8 to 64 (SVNQLGGLFVNGRPLPLDTRQQIVQLAIRGMRPCDISRSLKVSNGCVSKILGRYYRT). Residues 83-131 (AVVARIAQLKDEYPALFAWEIQRQLCAEGLCTQDKAPSVSSINRVLRAL) are RED subdomain. The segment at residues 170–229 (SHRNRTIFSPGQAEALEKEFQRGQYPDSVVRGKLAAATSLPEDTVRVWFSNRRAKWRRQE) is a DNA-binding region (homeobox). Positions 278–349 (FCQLCWGAVP…APSTYYLHWP (72 aa)) are transcription repression.

The protein belongs to the paired homeobox family. Specifically expressed in pancreatic islets.

It is found in the nucleus. Plays an important role in the differentiation and development of pancreatic islet beta cells. Transcriptional repressor that competes with PAX6 in binding to a common element in the glucagon, insulin and somatostatin promoters. This chain is Paired box protein Pax-4 (Pax4), found in Rattus norvegicus (Rat).